Consider the following 535-residue polypeptide: T-complex protein 1 subunit epsilon (535 aa).

It belongs to the TCP-1 chaperonin family. In terms of assembly, heterooligomeric complex of about 850 to 900 kDa that forms two stacked rings, 12 to 16 nm in diameter.

Its subcellular location is the cytoplasm. In terms of biological role, molecular chaperone; assists the folding of proteins upon ATP hydrolysis. Known to play a role, in vitro, in the folding of actin and tubulin. The protein is T-complex protein 1 subunit epsilon of Avena sativa (Oat).